The sequence spans 76 residues: DNA-binding protein S1FA2 (76 aa).

The Nuclear localization signal signature appears at 50–55 (PPRKKK). Residues 51–66 (PRKKKPLSKKKLKREK) show a composition bias toward basic residues. Residues 51–76 (PRKKKPLSKKKLKREKLKQGVPVPGE) form a disordered region.

This sequence belongs to the S1FA transcription factor family.

Its subcellular location is the nucleus. DNA-binding protein that specifically recognizes a negative element (S1F) within the RPS1 promoter. The protein is DNA-binding protein S1FA2 (S1FA2) of Arabidopsis thaliana (Mouse-ear cress).